The primary structure comprises 94 residues: Ammonia regulation of amino acid uptake protein (94 aa).

Repeats lie at residues His-48 to Gln-57 and His-58 to Gln-67.

Its function is as follows. Involved in ammonia regulation of the GAP1 permease. This Saccharomyces cerevisiae (strain ATCC 204508 / S288c) (Baker's yeast) protein is Ammonia regulation of amino acid uptake protein (AUA1).